The chain runs to 567 residues: Phenylalanine--tRNA ligase beta subunit (567 aa).

The region spanning 287–362 (YFQEEVEFNV…IGEGLASFHP (76 aa)) is the B5 domain. Residues D340, D346, E349, and D350 each contribute to the Mg(2+) site.

It belongs to the phenylalanyl-tRNA synthetase beta subunit family. Type 2 subfamily. Tetramer of two alpha and two beta subunits. Mg(2+) is required as a cofactor.

It is found in the cytoplasm. It carries out the reaction tRNA(Phe) + L-phenylalanine + ATP = L-phenylalanyl-tRNA(Phe) + AMP + diphosphate + H(+). The polypeptide is Phenylalanine--tRNA ligase beta subunit (Borreliella afzelii (strain PKo) (Borrelia afzelii)).